The following is a 157-amino-acid chain: Snaclec A16 (157 aa).

Residues Met-1 to Ala-23 form the signal peptide. Cystine bridges form between Cys-27/Cys-38, Cys-55/Cys-149, and Cys-124/Cys-141. Residues Tyr-34–Met-150 form the C-type lectin domain.

It belongs to the snaclec family. As to quaternary structure, heterodimer; disulfide-linked. Expressed by the venom gland.

The protein resides in the secreted. Functionally, interferes with one step of hemostasis (modulation of platelet aggregation, or coagulation cascade, for example). The protein is Snaclec A16 of Macrovipera lebetinus (Levantine viper).